A 411-amino-acid polypeptide reads, in one-letter code: MRVIVVNSGSSSIKYEVFALDDCSTLVDGLLERIGTRNARFKRRWLTDSGHWEEMEETRPIADHHEGFRFLLDAAVRYPTTRVAPGAFFGFGHRVVHGGEVFHEPVIVDDEVVRRIKDLIPLAPLHNPANVAAIEALRLIRPDVPNVAVFDTAFHQSMPPKAFLYALPHELYREHHVRRYGFHGTSHRYVAGEAARHLGLPEDYANLITLHLGNGASATAVQGGRSIDTSMGLTPLEGLIMGTRCGDLDPAVHFYISRKTGRSSEELEAMMNKESGLKGICGTNDMREIQRRSADGDARAQLAFEMFCYRIRKYIGSYSAALGRVDAIVFTGGIGENSAPVRRECCDGLRNLGVVLDHRRNEEDWSGLHEIQREDSPVKILVIPTDEEREIARQTIQTIRRAGVAGGARNQ.

Asn-7 serves as a coordination point for Mg(2+). ATP is bound at residue Lys-14. Substrate is bound at residue Arg-94. The Proton donor/acceptor role is filled by Asp-151. Residues 211-215 (HLGNG), 285-287 (DMR), and 333-337 (GIGEN) contribute to the ATP site. Position 387 (Glu-387) interacts with Mg(2+).

It belongs to the acetokinase family. Homodimer. Mg(2+) serves as cofactor. Mn(2+) is required as a cofactor.

It localises to the cytoplasm. The catalysed reaction is acetate + ATP = acetyl phosphate + ADP. It functions in the pathway metabolic intermediate biosynthesis; acetyl-CoA biosynthesis; acetyl-CoA from acetate: step 1/2. Its function is as follows. Catalyzes the formation of acetyl phosphate from acetate and ATP. Can also catalyze the reverse reaction. The sequence is that of Acetate kinase from Syntrophobacter fumaroxidans (strain DSM 10017 / MPOB).